A 456-amino-acid polypeptide reads, in one-letter code: E3 ubiquitin-protein ligase PUB24 (456 aa).

The region spanning 9–83 is the U-box domain; that stretch reads EIPNYFICPI…QHWCVENETR (75 aa).

In terms of processing, auto-ubiquitinated.

The catalysed reaction is S-ubiquitinyl-[E2 ubiquitin-conjugating enzyme]-L-cysteine + [acceptor protein]-L-lysine = [E2 ubiquitin-conjugating enzyme]-L-cysteine + N(6)-ubiquitinyl-[acceptor protein]-L-lysine.. It functions in the pathway protein modification; protein ubiquitination. Functionally, E3 ubiquitin-protein ligase that acts as a negative regulator of the immunity triggered by the pathogen-associated molecular patterns (PAMPs), in association with PUB22 and PUB23. In Arabidopsis thaliana (Mouse-ear cress), this protein is E3 ubiquitin-protein ligase PUB24 (PUB24).